The following is a 137-amino-acid chain: Small ribosomal subunit protein uS19 (137 aa).

A disordered region spans residues 115-137; sequence RNRVSHGSAGVGATRSSKFVPLK.

Belongs to the universal ribosomal protein uS19 family.

In terms of biological role, protein S19 forms a complex with S13 that binds strongly to the 16S ribosomal RNA. The chain is Small ribosomal subunit protein uS19 from Methanococcoides burtonii (strain DSM 6242 / NBRC 107633 / OCM 468 / ACE-M).